Reading from the N-terminus, the 727-residue chain is NADH-ubiquinone oxidoreductase 75 kDa subunit, mitochondrial (727 aa).

The N-terminal 23 residues, 1–23 (MLRIPVRKALVGLSKSPKGCVRT), are a transit peptide targeting the mitochondrion. The 2Fe-2S ferredoxin-type domain maps to 30–108 (NLIEVFVDGQ…GWNILTNSEK (79 aa)). Positions 64, 75, and 78 each coordinate [2Fe-2S] cluster. An N6-acetyllysine modification is found at lysine 84. Cysteine 92 contacts [2Fe-2S] cluster. The 4Fe-4S His(Cys)3-ligated-type domain maps to 108–147 (KSKKAREGVMELLLANHPLDCPICDQGGECDLQDQSMMFG). Residues histidine 124, cysteine 128, cysteine 131, cysteine 137, cysteine 176, cysteine 179, cysteine 182, and cysteine 226 each coordinate [4Fe-4S] cluster. A 4Fe-4S Mo/W bis-MGD-type domain is found at 245 to 301 (TRKTESIDVMDAVGSNIVVSTRTGEVMRILPRMHEDINEEWISDKTRFAYDGLKRQR). N6-acetyllysine is present on residues lysine 467, lysine 499, and lysine 709.

Belongs to the complex I 75 kDa subunit family. As to quaternary structure, core subunit of respiratory chain NADH dehydrogenase (Complex I) which is composed of 45 different subunits. This is the largest subunit of complex I and it is a component of the iron-sulfur (IP) fragment of the enzyme. Complex I associates with ubiquinol-cytochrome reductase complex (Complex III) to form supercomplexes. Interacts with MDM2 and AKAP1. [2Fe-2S] cluster serves as cofactor. Requires [4Fe-4S] cluster as cofactor.

The protein resides in the mitochondrion inner membrane. It catalyses the reaction a ubiquinone + NADH + 5 H(+)(in) = a ubiquinol + NAD(+) + 4 H(+)(out). In terms of biological role, core subunit of the mitochondrial membrane respiratory chain NADH dehydrogenase (Complex I) which catalyzes electron transfer from NADH through the respiratory chain, using ubiquinone as an electron acceptor. Essential for catalysing the entry and efficient transfer of electrons within complex I. Plays a key role in the assembly and stability of complex I and participates in the association of complex I with ubiquinol-cytochrome reductase complex (Complex III) to form supercomplexes. The protein is NADH-ubiquinone oxidoreductase 75 kDa subunit, mitochondrial (NDUFS1) of Pongo abelii (Sumatran orangutan).